Reading from the N-terminus, the 235-residue chain is RNA polymerase sigma-E factor (235 aa).

Residues 82-95 (DLISVGTIGLIKAV) carry the Polymerase core binding motif. The segment at residues 202-221 (QKEVADMLGISQSYISRLEK) is a DNA-binding region (H-T-H motif).

This sequence belongs to the sigma-70 factor family.

In terms of biological role, sigma factors are initiation factors that promote the attachment of RNA polymerase to specific initiation sites and are then released. This sigma factor is responsible for the expression of sporulation specific genes. This Clostridium acetobutylicum (strain ATCC 824 / DSM 792 / JCM 1419 / IAM 19013 / LMG 5710 / NBRC 13948 / NRRL B-527 / VKM B-1787 / 2291 / W) protein is RNA polymerase sigma-E factor (sigE).